Reading from the N-terminus, the 814-residue chain is Protein kintoun (814 aa).

Residues 234 to 246 (AANTARSPASPAP) show a composition bias toward low complexity. 2 disordered regions span residues 234-259 (AANT…EPRC) and 357-490 (ARQE…MGDP). The span at 388 to 404 (AAREESADGTGADHGEK) shows a compositional bias: basic and acidic residues. Phosphoserine occurs at positions 444 and 618. Residues 654-686 (AGLQGKGKGVREGCPLSEAEAADQSATSPAASD) are disordered. Low complexity predominate over residues 675-686 (ADQSATSPAASD).

The protein belongs to the PIH1 family. Kintoun subfamily. As to quaternary structure, interacts with DNAI2 and HSPA1A. Interacts with CFAP300. Interacts with DNAAF4. Interacts with DNAAF6/PIH1D3. In terms of tissue distribution, expressed in nearly all organs of adult, with higher expression in tissues known to have motile cilia and flagella, such as brain and testis.

It is found in the cytoplasm. The protein resides in the dynein axonemal particle. Its function is as follows. Required for cytoplasmic pre-assembly of axonemal dyneins, thereby playing a central role in motility in cilia and flagella. Involved in pre-assembly of dynein arm complexes in the cytoplasm before intraflagellar transport loads them for the ciliary compartment. The sequence is that of Protein kintoun from Mus musculus (Mouse).